The following is a 104-amino-acid chain: MVSTTLSVSRMTFVWRAARPSLLNHSLRKMSYQEGKPEPAKQALKKSKLPLGRFDSLEDSPEEREPLQKFPDDVNPVTKEKGGPKGPEPTRYGDWERKGRCIDF.

Residues 1–30 constitute a mitochondrion transit peptide; sequence MVSTTLSVSRMTFVWRAARPSLLNHSLRKM. The interval 29–104 is disordered; that stretch reads KMSYQEGKPE…WERKGRCIDF (76 aa). 2 stretches are compositionally biased toward basic and acidic residues: residues 63-83 and 91-104; these read EREP…EKGG and RYGD…CIDF.

Belongs to the SDHAF4 family. Interacts with Sdha in its FAD-bound form.

The protein localises to the mitochondrion matrix. Its function is as follows. Plays an essential role in the assembly of succinate dehydrogenase (SDH), an enzyme complex (also referred to as respiratory complex II) that is a component of both the tricarboxylic acid (TCA) cycle and the mitochondrial electron transport chain, and which couples the oxidation of succinate to fumarate with the reduction of ubiquinone (coenzyme Q) to ubiquinol. Binds to the flavoprotein subunit Sdha in its FAD-bound form, blocking the generation of excess reactive oxygen species (ROS) and facilitating its assembly with the iron-sulfur protein subunit Sdhb into the SDH catalytic dimer. This Mus musculus (Mouse) protein is Succinate dehydrogenase assembly factor 4, mitochondrial.